Reading from the N-terminus, the 359-residue chain is MQTLADLLNTIPAIDPAAMSRAQRHIDGLLKPVGSLGRLEALAIQLAGMPGLNGIPHVGKKAVLVMCADHGVWEEGVAISPKEVTAIQAENMTRGTTGVCVLAAQAGANVYVIDVGIDTAEPIPGLINMRVARGSGNIASAPAMSRHQAEKLLLDVICYTRELAKNGVTLFGVGELGMANTTPAAAIVSTITGRAPEEVVGIGANLPTDKLANKIDVVRRAITLNQPNPQDGVDVLAKVGGFDLVGMAGVMLGAASCGLPVLLDGFLSYAAALAACQMSPAIKPYLIPSHLSAEKGARIALSHLGLEPFLNMEMRLGEGSGAALAMPIIEAACAIYNNMGELAASNIVLPGNTTSDLNS.

Catalysis depends on E318, which acts as the Proton acceptor.

Belongs to the CobT family. As to quaternary structure, homodimer.

It catalyses the reaction 5,6-dimethylbenzimidazole + nicotinate beta-D-ribonucleotide = alpha-ribazole 5'-phosphate + nicotinate + H(+). Its pathway is nucleoside biosynthesis; alpha-ribazole biosynthesis; alpha-ribazole from 5,6-dimethylbenzimidazole: step 1/2. In terms of biological role, catalyzes the synthesis of alpha-ribazole-5'-phosphate from nicotinate mononucleotide (NAMN) and 5,6-dimethylbenzimidazole (DMB). The sequence is that of Nicotinate-nucleotide--dimethylbenzimidazole phosphoribosyltransferase from Escherichia coli (strain SMS-3-5 / SECEC).